A 250-amino-acid polypeptide reads, in one-letter code: Leucyl/phenylalanyl-tRNA--protein transferase (250 aa).

The protein belongs to the L/F-transferase family.

The protein resides in the cytoplasm. The catalysed reaction is N-terminal L-lysyl-[protein] + L-leucyl-tRNA(Leu) = N-terminal L-leucyl-L-lysyl-[protein] + tRNA(Leu) + H(+). It catalyses the reaction N-terminal L-arginyl-[protein] + L-leucyl-tRNA(Leu) = N-terminal L-leucyl-L-arginyl-[protein] + tRNA(Leu) + H(+). The enzyme catalyses L-phenylalanyl-tRNA(Phe) + an N-terminal L-alpha-aminoacyl-[protein] = an N-terminal L-phenylalanyl-L-alpha-aminoacyl-[protein] + tRNA(Phe). Functions in the N-end rule pathway of protein degradation where it conjugates Leu, Phe and, less efficiently, Met from aminoacyl-tRNAs to the N-termini of proteins containing an N-terminal arginine or lysine. The polypeptide is Leucyl/phenylalanyl-tRNA--protein transferase (Cupriavidus necator (strain ATCC 17699 / DSM 428 / KCTC 22496 / NCIMB 10442 / H16 / Stanier 337) (Ralstonia eutropha)).